We begin with the raw amino-acid sequence, 381 residues long: Chaperone protein DnaJ (381 aa).

In terms of domain architecture, J spans 5 to 70; the sequence is DYYEVLGLQK…QKRAAYDQYG (66 aa). The CR-type zinc-finger motif lies at 133–211; that stretch reads GTTKDIQINT…CHGEGRVHKK (79 aa). Zn(2+) contacts are provided by cysteine 146, cysteine 149, cysteine 163, cysteine 166, cysteine 185, cysteine 188, cysteine 199, and cysteine 202. CXXCXGXG motif repeat units lie at residues 146–153, 163–170, 185–192, and 199–206; these read CDSCGGSG, CPHCHGSG, CPTCHGSG, and CRSCHGEG.

It belongs to the DnaJ family. Homodimer. Zn(2+) is required as a cofactor.

The protein localises to the cytoplasm. Its function is as follows. Participates actively in the response to hyperosmotic and heat shock by preventing the aggregation of stress-denatured proteins and by disaggregating proteins, also in an autonomous, DnaK-independent fashion. Unfolded proteins bind initially to DnaJ; upon interaction with the DnaJ-bound protein, DnaK hydrolyzes its bound ATP, resulting in the formation of a stable complex. GrpE releases ADP from DnaK; ATP binding to DnaK triggers the release of the substrate protein, thus completing the reaction cycle. Several rounds of ATP-dependent interactions between DnaJ, DnaK and GrpE are required for fully efficient folding. Also involved, together with DnaK and GrpE, in the DNA replication of plasmids through activation of initiation proteins. The chain is Chaperone protein DnaJ from Haemophilus influenzae (strain 86-028NP).